Consider the following 639-residue polypeptide: Cystathionine gamma-synthase (639 aa).

Lys-443 carries the N6-(pyridoxal phosphate)lysine modification.

It belongs to the trans-sulfuration enzymes family. MET7 subfamily. Pyridoxal 5'-phosphate serves as cofactor.

It is found in the cytoplasm. The protein resides in the nucleus. The catalysed reaction is O-succinyl-L-homoserine + L-cysteine = L,L-cystathionine + succinate + H(+). Its pathway is amino-acid biosynthesis; L-methionine biosynthesis via de novo pathway; L-cystathionine from O-succinyl-L-homoserine: step 1/1. Catalyzes the formation of L-cystathionine from O-succinyl-L-homoserine (OSHS) and L-cysteine, via a gamma-replacement reaction. In the absence of thiol, catalyzes gamma-elimination to form 2-oxobutanoate, succinate and ammonia. The protein is Cystathionine gamma-synthase of Saccharomyces cerevisiae (strain ATCC 204508 / S288c) (Baker's yeast).